Consider the following 71-residue polypeptide: Beta-defensin 10 (71 aa).

The signal sequence occupies residues 1 to 23; that stretch reads MKTLCSLLLIGCLLFSYDTPVVG. Cystine bridges form between C37/C66, C44/C59, and C49/C67.

It belongs to the beta-defensin family.

The protein resides in the secreted. Its function is as follows. Has antibacterial activity. In Rattus norvegicus (Rat), this protein is Beta-defensin 10 (Defb10).